Here is a 117-residue protein sequence, read N- to C-terminus: MRVKRGLAAHRRHKKYLDMAKGYRGGRSRLYRTAREAVERSLCYAFRDRKVKKREFRKLWILRINAAARLNGLSYSKFMHGLTLAGVELNRKVLADLAVREKDDFAKIAELAKSKLN.

Belongs to the bacterial ribosomal protein bL20 family.

In terms of biological role, binds directly to 23S ribosomal RNA and is necessary for the in vitro assembly process of the 50S ribosomal subunit. It is not involved in the protein synthesizing functions of that subunit. The chain is Large ribosomal subunit protein bL20 from Nitratidesulfovibrio vulgaris (strain DP4) (Desulfovibrio vulgaris).